The chain runs to 180 residues: Flavodoxin 2 (180 aa).

The Flavodoxin-like domain occupies 4–173 (IGLFFGSNTG…RVAAWLAQIA (170 aa)). FMN contacts are provided by residues 10–15 (SNTGKT), T57, G61, D99, 106–108 (NYL), and D155.

FMN is required as a cofactor.

In terms of biological role, flavodoxins are low-potential electron donors to a number of redox enzymes. NifF is the electron donor to nitrogenase, and is thus implicated in nitrogen fixation. Does not function as an electron donor to nitrite reductase. The polypeptide is Flavodoxin 2 (Azotobacter vinelandii).